The sequence spans 180 residues: Large ribosomal subunit protein uL5 (180 aa).

This sequence belongs to the universal ribosomal protein uL5 family. In terms of assembly, part of the 50S ribosomal subunit; part of the 5S rRNA/L5/L18/L25 subcomplex. Contacts the 5S rRNA and the P site tRNA. Forms a bridge to the 30S subunit in the 70S ribosome.

In terms of biological role, this is one of the proteins that bind and probably mediate the attachment of the 5S RNA into the large ribosomal subunit, where it forms part of the central protuberance. In the 70S ribosome it contacts protein S13 of the 30S subunit (bridge B1b), connecting the 2 subunits; this bridge is implicated in subunit movement. Contacts the P site tRNA; the 5S rRNA and some of its associated proteins might help stabilize positioning of ribosome-bound tRNAs. This chain is Large ribosomal subunit protein uL5, found in Streptococcus pyogenes serotype M1.